Reading from the N-terminus, the 191-residue chain is Large ribosomal subunit protein uL5 (191 aa).

Belongs to the universal ribosomal protein uL5 family. Part of the 50S ribosomal subunit; part of the 5S rRNA/L5/L18/L25 subcomplex. Contacts the 5S rRNA and the P site tRNA. Forms a bridge to the 30S subunit in the 70S ribosome.

In terms of biological role, this is one of the proteins that bind and probably mediate the attachment of the 5S RNA into the large ribosomal subunit, where it forms part of the central protuberance. In the 70S ribosome it contacts protein S13 of the 30S subunit (bridge B1b), connecting the 2 subunits; this bridge is implicated in subunit movement. Contacts the P site tRNA; the 5S rRNA and some of its associated proteins might help stabilize positioning of ribosome-bound tRNAs. The sequence is that of Large ribosomal subunit protein uL5 from Salinibacter ruber (strain DSM 13855 / M31).